The primary structure comprises 463 residues: MSTNQIILTDQGDNYVNVWSHVAQDLYNHYGETLYNSWFSKVNFIESSLNTVILCAPTNFVRDWIKSKYSMVILQLFQHYNNTIKSIEIITKELPGTTQTVTELPTKTFADIGSSELNSENIFSTLDARFTFDNFVVGAPNELAYAAARAVAESSGAVSESNPLFLYGGVGLGKTHLMHAIGWYIKQHNPSRKVIYMSAEKFMYQFVKALRNKEVISFKEKFRSVDVLMIDDIQFICGKDSTQEEFFHTFNTLIDNNRQMVISCDRSPSDLDNIEDRIKSRLGWGLVADVHSTTYELRLGILESKIEQMNVKIPKDVIDFLASKIVSNVRELEGALNKVIAHSNFTLKEITLENTQNILRDLLRSNERIITVEDIQKKVASRYNIKLSDMSSSRRLREVARPRQIAMYLSKALTPKSLADIGKKFGKKDHTTVMHAIKKVEELLENDIELREEINLLMKILQN.

A domain I, interacts with DnaA modulators region spans residues 1–83 (MSTNQIILTD…LQLFQHYNNT (83 aa)). Residues 83–124 (TIKSIEIITKELPGTTQTVTELPTKTFADIGSSELNSENIFS) form a domain II region. Residues 125-343 (TLDARFTFDN…GALNKVIAHS (219 aa)) form a domain III, AAA+ region region. Residues G171, G173, K174, and T175 each coordinate ATP. The tract at residues 344-463 (NFTLKEITLE…INLLMKILQN (120 aa)) is domain IV, binds dsDNA.

This sequence belongs to the DnaA family. In terms of assembly, oligomerizes as a right-handed, spiral filament on DNA at oriC.

The protein localises to the cytoplasm. Its function is as follows. Plays an essential role in the initiation and regulation of chromosomal replication. ATP-DnaA binds to the origin of replication (oriC) to initiate formation of the DNA replication initiation complex once per cell cycle. Binds the DnaA box (a 9 base pair repeat at the origin) and separates the double-stranded (ds)DNA. Forms a right-handed helical filament on oriC DNA; dsDNA binds to the exterior of the filament while single-stranded (ss)DNA is stabiized in the filament's interior. The ATP-DnaA-oriC complex binds and stabilizes one strand of the AT-rich DNA unwinding element (DUE), permitting loading of DNA polymerase. After initiation quickly degrades to an ADP-DnaA complex that is not apt for DNA replication. Binds acidic phospholipids. This Rickettsia peacockii (strain Rustic) protein is Chromosomal replication initiator protein DnaA.